A 139-amino-acid polypeptide reads, in one-letter code: MSTAIQPAGTAGGGGSDSNGLADVVDTILDKGLVLDAYVRVSVVGIEILTVDARVVVASVDTYLRYADAVNRLDIVNEDPKSDLGGLVGDVAESATSGVAKGKTTGVLEAAGEKLGDMLTSDEPEPRKATRVRSRRADR.

A disordered region spans residues 113 to 139 (EKLGDMLTSDEPEPRKATRVRSRRADR). Residues 129–139 (ATRVRSRRADR) show a composition bias toward basic residues.

The protein belongs to the gas vesicle GvpA family. In terms of assembly, the gas vesicle shell is 2 nm thick and consists of a single layer of this protein. It forms helical ribs nearly perpendicular to the long axis of the vesicle.

Its subcellular location is the gas vesicle shell. Gas vesicles are hollow, gas filled proteinaceous nanostructures found in some microorganisms. During planktonic growth they allow positioning of the organism at a favorable depth for light or nutrient acquisition. GvpA forms the protein shell. This is Gas vesicle protein A from Mycobacterium sp. (strain JLS).